We begin with the raw amino-acid sequence, 268 residues long: NAD kinase (268 aa).

The active-site Proton acceptor is D45. Residues D45–G46, N122–E123, R148, D150, T161–S166, A185, and Q223 each bind NAD(+).

This sequence belongs to the NAD kinase family. A divalent metal cation serves as cofactor.

It localises to the cytoplasm. It carries out the reaction NAD(+) + ATP = ADP + NADP(+) + H(+). Functionally, involved in the regulation of the intracellular balance of NAD and NADP, and is a key enzyme in the biosynthesis of NADP. Catalyzes specifically the phosphorylation on 2'-hydroxyl of the adenosine moiety of NAD to yield NADP. The protein is NAD kinase of Latilactobacillus sakei subsp. sakei (strain 23K) (Lactobacillus sakei subsp. sakei).